Reading from the N-terminus, the 294-residue chain is Nucleoside-specific channel-forming protein Tsx (294 aa).

A signal peptide spans 1-22 (MKKTLLAASAVVALSASFTAGA).

Belongs to the nucleoside-specific channel-forming outer membrane porin (Tsx) (TC 1.B.10) family.

The protein localises to the cell outer membrane. Its function is as follows. Functions as a substrate-specific channel for nucleosides and deoxynucleosides. Also functions in albicidin uptake and as receptor for colicin K. Also is a receptor for several Tsx-specific bacteriophages. The polypeptide is Nucleoside-specific channel-forming protein Tsx (Klebsiella aerogenes (strain ATCC 13048 / DSM 30053 / CCUG 1429 / JCM 1235 / KCTC 2190 / NBRC 13534 / NCIMB 10102 / NCTC 10006 / CDC 819-56) (Enterobacter aerogenes)).